We begin with the raw amino-acid sequence, 326 residues long: Eukaryotic translation initiation factor 3 subunit I (326 aa).

5 WD repeats span residues 8 to 47 (GHER…RLGT), 50 to 89 (GHQG…VIAS), 145 to 184 (MTES…KVVD), 188 to 227 (DHSA…CLKT), and 285 to 326 (GHFG…NIFE).

Belongs to the eIF-3 subunit I family. As to quaternary structure, component of the eukaryotic translation initiation factor 3 (eIF-3) complex. The eIF-3 complex interacts with pix.

Its subcellular location is the cytoplasm. Functionally, component of the eukaryotic translation initiation factor 3 (eIF-3) complex, which is involved in protein synthesis of a specialized repertoire of mRNAs and, together with other initiation factors, stimulates binding of mRNA and methionyl-tRNAi to the 40S ribosome. The eIF-3 complex specifically targets and initiates translation of a subset of mRNAs involved in cell proliferation. The chain is Eukaryotic translation initiation factor 3 subunit I from Drosophila sechellia (Fruit fly).